An 80-amino-acid polypeptide reads, in one-letter code: Ribosome assembly protein 3 (80 aa).

The segment covering 1–10 has biased composition (basic and acidic residues); it reads MATNDQKIDN. Positions 1–35 are disordered; the sequence is MATNDQKIDNKSTVSNMLENPMFQTFSKKETEKPS. Residues 11 to 26 are compositionally biased toward polar residues; it reads KSTVSNMLENPMFQTF.

This sequence belongs to the RSA3 family. As to quaternary structure, associates with nucleolar pre-ribosomal particles.

Its subcellular location is the nucleus. The protein resides in the nucleolus. Functionally, required for efficient biogenesis of the 60S ribosomal subunit. This Schizosaccharomyces pombe (strain 972 / ATCC 24843) (Fission yeast) protein is Ribosome assembly protein 3 (rsa3).